An 865-amino-acid chain; its full sequence is Alanine--tRNA ligase (865 aa).

Positions 554, 558, 656, and 660 each coordinate Zn(2+).

Belongs to the class-II aminoacyl-tRNA synthetase family. Requires Zn(2+) as cofactor.

Its subcellular location is the cytoplasm. It catalyses the reaction tRNA(Ala) + L-alanine + ATP = L-alanyl-tRNA(Ala) + AMP + diphosphate. Functionally, catalyzes the attachment of alanine to tRNA(Ala) in a two-step reaction: alanine is first activated by ATP to form Ala-AMP and then transferred to the acceptor end of tRNA(Ala). Also edits incorrectly charged Ser-tRNA(Ala) and Gly-tRNA(Ala) via its editing domain. The polypeptide is Alanine--tRNA ligase (Francisella tularensis subsp. mediasiatica (strain FSC147)).